We begin with the raw amino-acid sequence, 528 residues long: Putative galacturonosyltransferase 2 (528 aa).

Belongs to the glycosyltransferase 8 family.

It participates in glycan metabolism; pectin biosynthesis. Functionally, may be involved in pectin and/or xylans biosynthesis in cell walls. This Arabidopsis thaliana (Mouse-ear cress) protein is Putative galacturonosyltransferase 2 (GAUT2).